A 618-amino-acid polypeptide reads, in one-letter code: Poly(A)-specific ribonuclease PARN-like (618 aa).

The a divalent metal cation site is built by Ser54, Gln56, Asp332, and Asn418. The disordered stretch occupies residues 588 to 607 (ALESSDTDPDSDTKPSEIDW).

It belongs to the CAF1 family. The cofactor is a divalent metal cation.

The protein localises to the nucleus. It is found in the cytoplasm. It carries out the reaction Exonucleolytic cleavage of poly(A) to 5'-AMP.. Functionally, 3'-exoribonuclease that has a preference for poly(A) tails of mRNAs, thereby efficiently degrading poly(A) tails. Exonucleolytic degradation of the poly(A) tail is often the first step in the decay of eukaryotic mRNAs. This Arabidopsis thaliana (Mouse-ear cress) protein is Poly(A)-specific ribonuclease PARN-like.